A 281-amino-acid chain; its full sequence is Acetyl-coenzyme A carboxylase carboxyl transferase subunit beta (281 aa).

In terms of domain architecture, CoA carboxyltransferase N-terminal spans 23 to 281; the sequence is LWSKCEDCGA…KTLAMMRVEG (259 aa). The Zn(2+) site is built by C27, C30, C46, and C49. The C4-type zinc-finger motif lies at 27 to 49; that stretch reads CEDCGAMLHRRQLEENLNTCNEC.

It belongs to the AccD/PCCB family. In terms of assembly, acetyl-CoA carboxylase is a heterohexamer composed of biotin carboxyl carrier protein (AccB), biotin carboxylase (AccC) and two subunits each of ACCase subunit alpha (AccA) and ACCase subunit beta (AccD). It depends on Zn(2+) as a cofactor.

The protein resides in the cytoplasm. It carries out the reaction N(6)-carboxybiotinyl-L-lysyl-[protein] + acetyl-CoA = N(6)-biotinyl-L-lysyl-[protein] + malonyl-CoA. The protein operates within lipid metabolism; malonyl-CoA biosynthesis; malonyl-CoA from acetyl-CoA: step 1/1. In terms of biological role, component of the acetyl coenzyme A carboxylase (ACC) complex. Biotin carboxylase (BC) catalyzes the carboxylation of biotin on its carrier protein (BCCP) and then the CO(2) group is transferred by the transcarboxylase to acetyl-CoA to form malonyl-CoA. The polypeptide is Acetyl-coenzyme A carboxylase carboxyl transferase subunit beta (Chlorobium luteolum (strain DSM 273 / BCRC 81028 / 2530) (Pelodictyon luteolum)).